The chain runs to 450 residues: UDP-N-acetylmuramoylalanine--D-glutamate ligase (450 aa).

119–125 (GSNGKTT) serves as a coordination point for ATP.

This sequence belongs to the MurCDEF family.

Its subcellular location is the cytoplasm. The enzyme catalyses UDP-N-acetyl-alpha-D-muramoyl-L-alanine + D-glutamate + ATP = UDP-N-acetyl-alpha-D-muramoyl-L-alanyl-D-glutamate + ADP + phosphate + H(+). It functions in the pathway cell wall biogenesis; peptidoglycan biosynthesis. Its function is as follows. Cell wall formation. Catalyzes the addition of glutamate to the nucleotide precursor UDP-N-acetylmuramoyl-L-alanine (UMA). The polypeptide is UDP-N-acetylmuramoylalanine--D-glutamate ligase (Bacillus thuringiensis (strain Al Hakam)).